An 850-amino-acid chain; its full sequence is DNA mismatch repair protein MutS (850 aa).

608-615 (GPNMGGKS) is a binding site for ATP.

The protein belongs to the DNA mismatch repair MutS family.

Its function is as follows. This protein is involved in the repair of mismatches in DNA. It is possible that it carries out the mismatch recognition step. This protein has a weak ATPase activity. The polypeptide is DNA mismatch repair protein MutS (Thiobacillus denitrificans (strain ATCC 25259 / T1)).